We begin with the raw amino-acid sequence, 127 residues long: Large ribosomal subunit protein bL17 (127 aa).

The protein belongs to the bacterial ribosomal protein bL17 family. Part of the 50S ribosomal subunit. Contacts protein L32.

This is Large ribosomal subunit protein bL17 from Lactobacillus delbrueckii subsp. bulgaricus (strain ATCC 11842 / DSM 20081 / BCRC 10696 / JCM 1002 / NBRC 13953 / NCIMB 11778 / NCTC 12712 / WDCM 00102 / Lb 14).